A 205-amino-acid chain; its full sequence is N-(5'-phosphoribosyl)anthranilate isomerase (205 aa).

The protein belongs to the TrpF family.

It carries out the reaction N-(5-phospho-beta-D-ribosyl)anthranilate = 1-(2-carboxyphenylamino)-1-deoxy-D-ribulose 5-phosphate. It participates in amino-acid biosynthesis; L-tryptophan biosynthesis; L-tryptophan from chorismate: step 3/5. This is N-(5'-phosphoribosyl)anthranilate isomerase from Marinomonas sp. (strain MWYL1).